The chain runs to 1140 residues: Calcium-activated potassium channel slo-1 (1140 aa).

Residues 1–44 (MGEIYSPSQSKGFNQPYGYPMNCNLSRVFMEMTEEDRKCLEERK) lie on the Extracellular side of the membrane. Residues 45 to 65 (YWCFLLSSITTFCASMILVVI) traverse the membrane as a helical segment. The Cytoplasmic portion of the chain corresponds to 66–139 (WRVVTHLCCQ…LISGQSLTGR (74 aa)). A helical membrane pass occupies residues 140 to 161 (FLVLLVFILSIGSLIIYFYDAS). Residues 162–178 (FQNFQVETCIPWQDSPS) lie on the Extracellular side of the membrane. A helical transmembrane segment spans residues 179 to 199 (QQIDLGFNIFFLVYFFIRFIA). Residues 200–203 (ASDK) lie on the Cytoplasmic side of the membrane. The helical transmembrane segment at 204–224 (VWFLLEMYSWIDFFTIPPSFV) threads the bilayer. The Extracellular segment spans residues 225–228 (AIYL). Residues 229-249 (QRNWLGFRFLRALRLMTVPDI) traverse the membrane as a helical; Voltage-sensor segment. The Cytoplasmic portion of the chain corresponds to 250–264 (LQYLNILKTSSSIRL). The helical transmembrane segment at 265-285 (TQLVTIFVAVCLTGAGLVHLL) threads the bilayer. Topologically, residues 286–299 (ENSGDFFKGFINPH) are extracellular. Residues 300–322 (RITYADSVYFVLVTMSTVGYGDI) constitute an intramembrane region (pore-forming). Positions 316–319 (TVGY) match the Selectivity for potassium motif. Over 323–331 (YCTTLCGRL) the chain is Extracellular. The chain crosses the membrane as a helical span at residues 332–352 (FMIFFILFGLAMFASYVPEIA). Residues 353-1140 (DLIGNRQKYG…LEYEPGKRHF (788 aa)) are Cytoplasmic-facing. Positions 371 to 514 (KKHIVVCGHI…DWKRGDDVIC (144 aa)) constitute an RCK N-terminal 1 domain. The segment at 520-540 (LGFIAQSCLAPGFSTMMANLF) is segment S7. The tract at residues 578–598 (MTFPEAVDLLFNRLGLLLLAI) is segment S8. The segment S9 stretch occupies residues 797–817 (VLNGHVVVCLFADQDSPLIGL). The 155-residue stretch at 799–953 (NGHVVVCLFA…GAKFGTNVPM (155 aa)) folds into the RCK N-terminal 2 domain. The short motif at 955 to 977 (TELVNDSNVQFLDQDDDDDPDTE) is the Calcium bowl element. Gln-964, Asp-967, Asp-970, and Asp-972 together coordinate Ca(2+). The interval 984–1004 (FACGTAFAISVLDSLMSTTYF) is segment S10.

This sequence belongs to the potassium channel family. Calcium-activated (TC 1.A.1.3) subfamily. Slo sub-subfamily. Homotetramer; which constitutes the calcium-activated potassium channel. Phosphorylated. Expressed in synaptic regions of the nervous system including in both the nerve ring and nerve cords, as well as in the body-wall and vulval muscle. Expressed broadly in motor neurons. Forms puncta at presynaptic terminals of neurons, muscle excitation sites, and in the dorsal nerve cord.

It localises to the cell membrane. Its subcellular location is the synapse. Functionally, potassium channel activated by both membrane depolarization or increase in cytosolic Ca(2+) that mediates export of K(+). Its activation dampens the excitatory events that elevate the cytosolic Ca(2+) concentration and/or depolarize the cell membrane. It therefore contributes to repolarization of the membrane potential. Essential for the regulation of neurotransmitter release at synapses. Regulates longevity and age-associated decline in motor activity in mid-late life, by acting in motor neurons and through daf-16 in the intestine. When clustered in neurons, mediates ethanol-induced suppression of locomotory and egg-laying behaviors. This chain is Calcium-activated potassium channel slo-1, found in Caenorhabditis elegans.